Here is a 129-residue protein sequence, read N- to C-terminus: Small ribosomal subunit protein uS11 (129 aa).

This sequence belongs to the universal ribosomal protein uS11 family. As to quaternary structure, part of the 30S ribosomal subunit. Interacts with proteins S7 and S18. Binds to IF-3.

Located on the platform of the 30S subunit, it bridges several disparate RNA helices of the 16S rRNA. Forms part of the Shine-Dalgarno cleft in the 70S ribosome. In Xanthobacter autotrophicus (strain ATCC BAA-1158 / Py2), this protein is Small ribosomal subunit protein uS11.